The chain runs to 92 residues: Evasin P942 (92 aa).

The first 26 residues, 1 to 26 (MEVKTFAFLQIAVLIALGLHLAPAGS), serve as a signal peptide directing secretion. 3 disulfide bridges follow: Cys-44–Cys-63, Cys-48–Cys-65, and Cys-59–Cys-76. Residue Asn-47 is glycosylated (N-linked (GlcNAc...) asparagine). The N-linked (GlcNAc...) asparagine glycan is linked to Asn-70.

Its subcellular location is the secreted. In terms of biological role, salivary chemokine-binding protein which binds to host chemokines CXCL1, CXCL2, CXCL3, CXCL4, CXCL5, CXCL6, CXCL10, CXCL11 and CXCL13. This Ixodes ricinus (Common tick) protein is Evasin P942.